The sequence spans 417 residues: Serine hydroxymethyltransferase (417 aa).

Residues L121 and 125–127 (GHL) each bind (6S)-5,6,7,8-tetrahydrofolate. K229 is modified (N6-(pyridoxal phosphate)lysine). Residue 355 to 357 (SPF) coordinates (6S)-5,6,7,8-tetrahydrofolate.

Belongs to the SHMT family. Homodimer. It depends on pyridoxal 5'-phosphate as a cofactor.

The protein localises to the cytoplasm. The enzyme catalyses (6R)-5,10-methylene-5,6,7,8-tetrahydrofolate + glycine + H2O = (6S)-5,6,7,8-tetrahydrofolate + L-serine. The protein operates within one-carbon metabolism; tetrahydrofolate interconversion. It functions in the pathway amino-acid biosynthesis; glycine biosynthesis; glycine from L-serine: step 1/1. Catalyzes the reversible interconversion of serine and glycine with tetrahydrofolate (THF) serving as the one-carbon carrier. This reaction serves as the major source of one-carbon groups required for the biosynthesis of purines, thymidylate, methionine, and other important biomolecules. Also exhibits THF-independent aldolase activity toward beta-hydroxyamino acids, producing glycine and aldehydes, via a retro-aldol mechanism. The sequence is that of Serine hydroxymethyltransferase from Xylella fastidiosa (strain 9a5c).